Reading from the N-terminus, the 282-residue chain is tRNA pseudouridine synthase A (282 aa).

The Nucleophile role is filled by Asp51. Tyr109 serves as a coordination point for substrate.

This sequence belongs to the tRNA pseudouridine synthase TruA family. In terms of assembly, homodimer.

The catalysed reaction is uridine(38/39/40) in tRNA = pseudouridine(38/39/40) in tRNA. Its function is as follows. Formation of pseudouridine at positions 38, 39 and 40 in the anticodon stem and loop of transfer RNAs. The polypeptide is tRNA pseudouridine synthase A (Delftia acidovorans (strain DSM 14801 / SPH-1)).